The following is a 268-amino-acid chain: MHRIDETFRRLRAQSRKALIPFITAGDPSLEAAVPVMHALVRAGADVIELGVPFSDPMADGPVIQHSSERALQRGVGLAYVLQTVDVFRQSDAVTPVVLMGYLNPLEIYGIARFTQQALASGVDGVLLVDLPPEEADEIRAIFSAAGLALIVLASPTTSASRLATLSGVAQGYLYYVSFAGVTGADRLDAQSAGDRLRGLRAQTQVPVVVGFGIRDAASAVVMAVDADGVVVGSALVTALSDAPDVDTACRRADAFLAPLRQALDAVK.

Residues glutamate 49 and aspartate 60 each act as proton acceptor in the active site.

The protein belongs to the TrpA family. In terms of assembly, tetramer of two alpha and two beta chains.

The enzyme catalyses (1S,2R)-1-C-(indol-3-yl)glycerol 3-phosphate + L-serine = D-glyceraldehyde 3-phosphate + L-tryptophan + H2O. It functions in the pathway amino-acid biosynthesis; L-tryptophan biosynthesis; L-tryptophan from chorismate: step 5/5. The alpha subunit is responsible for the aldol cleavage of indoleglycerol phosphate to indole and glyceraldehyde 3-phosphate. The protein is Tryptophan synthase alpha chain of Xylella fastidiosa (strain M23).